The sequence spans 360 residues: uncharacterized protein (360 aa).

Residues 193–245 (SRHTRPKGQPLSSPKKNSGSAARPSTAIGLCRRSQTPGALQSTGPSNTELEPE) form a disordered region. 2 stretches are compositionally biased toward polar residues: residues 202 to 212 (PLSSPKKNSGS) and 225 to 241 (RSQT…SNTE).

This is an uncharacterized protein from Homo sapiens (Human).